A 567-amino-acid chain; its full sequence is DNA ligase B (567 aa).

Lys132 acts as the N6-AMP-lysine intermediate in catalysis.

Belongs to the NAD-dependent DNA ligase family. LigB subfamily.

It catalyses the reaction NAD(+) + (deoxyribonucleotide)n-3'-hydroxyl + 5'-phospho-(deoxyribonucleotide)m = (deoxyribonucleotide)n+m + AMP + beta-nicotinamide D-nucleotide.. In terms of biological role, catalyzes the formation of phosphodiester linkages between 5'-phosphoryl and 3'-hydroxyl groups in double-stranded DNA using NAD as a coenzyme and as the energy source for the reaction. This Yersinia pestis bv. Antiqua (strain Angola) protein is DNA ligase B.